Here is a 458-residue protein sequence, read N- to C-terminus: Exodeoxyribonuclease 7 large subunit (458 aa).

This sequence belongs to the XseA family. As to quaternary structure, heterooligomer composed of large and small subunits.

The protein resides in the cytoplasm. The enzyme catalyses Exonucleolytic cleavage in either 5'- to 3'- or 3'- to 5'-direction to yield nucleoside 5'-phosphates.. In terms of biological role, bidirectionally degrades single-stranded DNA into large acid-insoluble oligonucleotides, which are then degraded further into small acid-soluble oligonucleotides. The polypeptide is Exodeoxyribonuclease 7 large subunit (Shouchella clausii (strain KSM-K16) (Alkalihalobacillus clausii)).